The primary structure comprises 620 residues: Cilia- and flagella-associated protein 52 (620 aa).

WD repeat units lie at residues 62–106, 109–150, 156–195, 288–327, 330–369, 372–411, 415–454, 459–498, 500–539, 543–582, and 585–620; these read GHGN…LLAR, LHKG…AICG, LNVG…RKIW, QLQG…ETLI, CHFD…ELLR, VPNM…LMYV, AHRI…QKLE, EHKS…RNQM, LANT…VIRE, SLSG…VTHV, and GHSG…PYTS.

This sequence belongs to the CFAP52 family. As to quaternary structure, microtubule inner protein component of sperm flagellar doublet microtubules. Interacts with BRCA2. Interacts with the CCT chaperonin complex. Interacts with HSP70. Interacts with AK8. Interacts with CFAP45. Interacts with DNAI1. Interacts with IQDC. Expressed in respiratory cells and sperm (at protein level). Highly expressed in testis. Up-regulated in hepatocellular carcinoma (HCC).

It localises to the cytoplasm. It is found in the cytoskeleton. Its subcellular location is the cilium axoneme. The protein localises to the flagellum axoneme. In terms of biological role, microtubule inner protein (MIP) part of the dynein-decorated doublet microtubules (DMTs) in cilia axoneme. Important for proper ciliary and flagellar beating. May act in cooperation with CFAP45 and axonemal dynein subunit DNAH11. May play a role in cell growth and/or survival. The chain is Cilia- and flagella-associated protein 52 from Homo sapiens (Human).